The sequence spans 443 residues: MSTSDSIVSSQTKQSSWRKSDTTWTLGLFGTAIGAGVLFFPIRAGFGGLIPILLMLVLAYPIAFYCHRALARLCLSGSNPSGNITETVEEHFGKTGGVVITFLYFFAICPLLWIYGVTITNTFMTFWENQLGFAPLNRGFVALFLLLLMAFVIWFGKDLMVKVMSYLVWPFIASLVLISLSLIPYWNSAVIDQVDLGSLSLTGHDGILITVWLGISIMVFSFNFSPIVSSFVVSKREEYEKDFGRDFTERKCSQIISRASMLMVAVVMFFAFSCLFTLSPANMAEAKAQNIPVLSYLANHFASMTGTKTTFAITLEYAASIIALVAIFKSFFGHYLGTLEGLNGLVLKFGYKGDKTKVSLGKLNTISMIFIMGSTWVVAYANPNILDLIEAMGAPIIASLLCLLPMYAIRKAPSLAKYRGRLDNVFVTVIGLLTILNIVYKLF.

11 consecutive transmembrane segments (helical) span residues 22-42 (TTWTLGLFGTAIGAGVLFFPI), 44-64 (AGFGGLIPILLMLVLAYPIAF), 97-117 (GVVITFLYFFAICPLLWIYGV), 140-160 (FVALFLLLLMAFVIWFGKDLM), 163-183 (VMSYLVWPFIASLVLISLSLI), 207-227 (ILITVWLGISIMVFSFNFSPI), 261-281 (MLMVAVVMFFAFSCLFTLSPA), 311-331 (FAITLEYAASIIALVAIFKSF), 366-386 (ISMIFIMGSTWVVAYANPNIL), 389-409 (IEAMGAPIIASLLCLLPMYAI), and 423-443 (DNVFVTVIGLLTILNIVYKLF).

The protein belongs to the amino acid/polyamine transporter 2 family. SdaC/TdcC subfamily.

The protein localises to the cell inner membrane. The catalysed reaction is L-threonine(in) + H(+)(in) = L-threonine(out) + H(+)(out). The enzyme catalyses L-serine(in) + H(+)(in) = L-serine(out) + H(+)(out). In terms of biological role, involved in the import of threonine and serine into the cell, with the concomitant import of a proton (symport system). In Shigella sonnei (strain Ss046), this protein is Threonine/serine transporter TdcC.